Reading from the N-terminus, the 211-residue chain is Transcription antitermination protein NusB (211 aa).

Residues 152-211 form a disordered region; the sequence is PAKKERVANPFPSTPPKKPENVPNPFSTPFKKNSSEPIRNPFEGNKSPQPPQKTLRRKKK. Residues 175–188 are compositionally biased toward polar residues; sequence NPFSTPFKKNSSEP.

It belongs to the NusB family.

Its function is as follows. Involved in transcription antitermination. Required for transcription of ribosomal RNA (rRNA) genes. Binds specifically to the boxA antiterminator sequence of the ribosomal RNA (rrn) operons. This is Transcription antitermination protein NusB from Chloroherpeton thalassium (strain ATCC 35110 / GB-78).